Reading from the N-terminus, the 141-residue chain is Hemoglobin subunit alpha-1 (141 aa).

The Globin domain occupies valine 1 to arginine 141. Histidine 58 contacts O2. Histidine 87 is a binding site for heme b.

This sequence belongs to the globin family. Heterotetramer of two alpha chains and two beta chains. In terms of tissue distribution, red blood cells.

Involved in oxygen transport from the lung to the various peripheral tissues. The protein is Hemoglobin subunit alpha-1 of Naja naja (Indian cobra).